The sequence spans 217 residues: ATP-dependent Clp protease proteolytic subunit (217 aa).

Serine 121 serves as the catalytic Nucleophile. Histidine 146 is an active-site residue.

The protein belongs to the peptidase S14 family. Fourteen ClpP subunits assemble into 2 heptameric rings which stack back to back to give a disk-like structure with a central cavity, resembling the structure of eukaryotic proteasomes.

The protein resides in the cytoplasm. The catalysed reaction is Hydrolysis of proteins to small peptides in the presence of ATP and magnesium. alpha-casein is the usual test substrate. In the absence of ATP, only oligopeptides shorter than five residues are hydrolyzed (such as succinyl-Leu-Tyr-|-NHMec, and Leu-Tyr-Leu-|-Tyr-Trp, in which cleavage of the -Tyr-|-Leu- and -Tyr-|-Trp bonds also occurs).. Its function is as follows. Cleaves peptides in various proteins in a process that requires ATP hydrolysis. Has a chymotrypsin-like activity. Plays a major role in the degradation of misfolded proteins. The chain is ATP-dependent Clp protease proteolytic subunit from Burkholderia lata (strain ATCC 17760 / DSM 23089 / LMG 22485 / NCIMB 9086 / R18194 / 383).